A 276-amino-acid polypeptide reads, in one-letter code: Large ribosomal subunit protein uL2 (276 aa).

The tract at residues 208-276 (KAGRNRHRGI…KLIISRRKGK (69 aa)) is disordered. A compositionally biased stretch (basic and acidic residues) spans 230 to 240 (DHPHGGGEGKK). The segment covering 255–276 (KGAKTRRKKASDKLIISRRKGK) has biased composition (basic residues).

The protein belongs to the universal ribosomal protein uL2 family. In terms of assembly, part of the 50S ribosomal subunit. Forms a bridge to the 30S subunit in the 70S ribosome.

One of the primary rRNA binding proteins. Required for association of the 30S and 50S subunits to form the 70S ribosome, for tRNA binding and peptide bond formation. It has been suggested to have peptidyltransferase activity; this is somewhat controversial. Makes several contacts with the 16S rRNA in the 70S ribosome. The sequence is that of Large ribosomal subunit protein uL2 from Campylobacter lari (strain RM2100 / D67 / ATCC BAA-1060).